Reading from the N-terminus, the 318-residue chain is B3 domain-containing protein At1g05930 (318 aa).

The TF-B3 DNA-binding region spans F201–R293.

Its subcellular location is the nucleus. This Arabidopsis thaliana (Mouse-ear cress) protein is B3 domain-containing protein At1g05930.